The following is a 390-amino-acid chain: Ribonuclease D (390 aa).

In terms of domain architecture, 3'-5' exonuclease spans 7–173 (ITDSATLAAL…TLFPMLLKEL (167 aa)). The region spanning 212–293 (KADILGRLKA…ENAEALRPEE (82 aa)) is the HRDC domain.

Belongs to the RNase D family. The cofactor is a divalent metal cation.

Its subcellular location is the cytoplasm. It catalyses the reaction Exonucleolytic cleavage that removes extra residues from the 3'-terminus of tRNA to produce 5'-mononucleotides.. Its function is as follows. Exonuclease involved in the 3' processing of various precursor tRNAs. Initiates hydrolysis at the 3'-terminus of an RNA molecule and releases 5'-mononucleotides. The chain is Ribonuclease D from Zymomonas mobilis subsp. mobilis (strain ATCC 31821 / ZM4 / CP4).